The sequence spans 321 residues: Cytochrome f (321 aa).

The N-terminal stretch at 1 to 35 is a signal peptide; that stretch reads MQNTNTLNWINKLIYLSISIPIFFLILVTTYPNSV. Heme-binding residues include tyrosine 38, cysteine 58, cysteine 61, and histidine 62. A helical membrane pass occupies residues 287–307; it reads MEGLILFFISVILAQVFLVLK.

Belongs to the cytochrome f family. In terms of assembly, the 4 large subunits of the cytochrome b6-f complex are cytochrome b6, subunit IV (17 kDa polypeptide, petD), cytochrome f and the Rieske protein, while the 4 small subunits are PetG, PetL, PetM and PetN. The complex functions as a dimer. The cofactor is heme.

It is found in the plastid. It localises to the chloroplast thylakoid membrane. Component of the cytochrome b6-f complex, which mediates electron transfer between photosystem II (PSII) and photosystem I (PSI), cyclic electron flow around PSI, and state transitions. The sequence is that of Cytochrome f from Chara vulgaris (Common stonewort).